A 116-amino-acid polypeptide reads, in one-letter code: Small ribosomal subunit protein uS17 (116 aa).

It belongs to the universal ribosomal protein uS17 family. In terms of assembly, part of the 30S ribosomal subunit.

One of the primary rRNA binding proteins, it binds specifically to the 5'-end of 16S ribosomal RNA. This is Small ribosomal subunit protein uS17 from Pyrococcus horikoshii (strain ATCC 700860 / DSM 12428 / JCM 9974 / NBRC 100139 / OT-3).